Consider the following 154-residue polypeptide: Large ribosomal subunit protein uL16 (154 aa).

Belongs to the universal ribosomal protein uL16 family. Part of the 50S ribosomal subunit.

Functionally, binds 23S rRNA and is also seen to make contacts with the A and possibly P site tRNAs. This chain is Large ribosomal subunit protein uL16, found in Synechococcus sp. (strain RCC307).